The following is a 720-amino-acid chain: TAL effector protein Rip19 (720 aa).

2 disordered regions span residues 13–85 (SVSL…PSLV) and 175–205 (QAFA…PTFL). Positions 67–85 (PRRPLPVAPASAPPAPSLV) are enriched in pro residues. The Nuclear localization signal 1 signature appears at 185-191 (RSARARR). A Cryptic repeat -1 repeat occupies 286-320 (LTRAHIVDIARQRSGDLALQALLPVATALTAAPLR). One copy of the Cryptic repeat 0 repeat lies at 321-354 (LSASQIATVAQYGERPAIQALYRLRRKLTRAPLH). The stretch at 355–389 (LTPQQVVAIASHDGGKPALEAVWAKLPVLRGVPYA) is one Core repeat 1 repeat. A Cryptic repeat +1 repeat occupies 390–423 (LSTAQVVAIACISGQQALEAIEAHMPTLRQAPHS). Residues 424–457 (LSPERVAAIACIGGRSAVEAVRQGLPVKAIRRIR) form a Cryptic repeat +2 repeat. 3 consecutive short sequence motifs (nuclear localization signal) follow at residues 455-458 (RIRR), 583-586 (HRKR), and 620-623 (RRKR). The segment at 571–611 (SPGMAGQSACSPHRKRPAETAIAPRSIRRRPNNAGQPSEPW) is disordered.

The protein belongs to the transcription activator-like effector (TALE) family. RipTAL/RTL subfamily.

It localises to the secreted. It is found in the host nucleus. Its function is as follows. Does not activate plant gene transcription, because it has too few core repeats. In Ralstonia solanacearum (Pseudomonas solanacearum), this protein is TAL effector protein Rip19.